The primary structure comprises 472 residues: Glutamate--tRNA ligase (472 aa).

A 'HIGH' region motif is present at residues 9-19 (PSPTGYLHVGG). Positions 98, 100, 125, and 127 each coordinate Zn(2+). The short motif at 237-241 (KLSKR) is the 'KMSKS' region element. Lys-240 contacts ATP.

The protein belongs to the class-I aminoacyl-tRNA synthetase family. Glutamate--tRNA ligase type 1 subfamily. In terms of assembly, monomer. It depends on Zn(2+) as a cofactor.

It is found in the cytoplasm. It catalyses the reaction tRNA(Glu) + L-glutamate + ATP = L-glutamyl-tRNA(Glu) + AMP + diphosphate. Catalyzes the attachment of glutamate to tRNA(Glu) in a two-step reaction: glutamate is first activated by ATP to form Glu-AMP and then transferred to the acceptor end of tRNA(Glu). The protein is Glutamate--tRNA ligase of Klebsiella pneumoniae subsp. pneumoniae (strain ATCC 700721 / MGH 78578).